The primary structure comprises 285 residues: uncharacterized protein (285 aa).

Serine 168 contacts substrate. Tyrosine 181 serves as the catalytic Proton acceptor.

It belongs to the short-chain dehydrogenases/reductases (SDR) family.

This is an uncharacterized protein from Haemophilus influenzae (strain ATCC 51907 / DSM 11121 / KW20 / Rd).